Reading from the N-terminus, the 320-residue chain is o-succinylbenzoate synthase (320 aa).

Catalysis depends on K133, which acts as the Proton donor. Residues D161, E190, and D213 each contribute to the Mg(2+) site. Residue K235 is the Proton acceptor of the active site.

Belongs to the mandelate racemase/muconate lactonizing enzyme family. MenC type 1 subfamily. It depends on a divalent metal cation as a cofactor.

It carries out the reaction (1R,6R)-6-hydroxy-2-succinyl-cyclohexa-2,4-diene-1-carboxylate = 2-succinylbenzoate + H2O. It participates in quinol/quinone metabolism; 1,4-dihydroxy-2-naphthoate biosynthesis; 1,4-dihydroxy-2-naphthoate from chorismate: step 4/7. The protein operates within quinol/quinone metabolism; menaquinone biosynthesis. Functionally, converts 2-succinyl-6-hydroxy-2,4-cyclohexadiene-1-carboxylate (SHCHC) to 2-succinylbenzoate (OSB). The protein is o-succinylbenzoate synthase of Shigella sonnei (strain Ss046).